A 214-amino-acid polypeptide reads, in one-letter code: Probable chemoreceptor glutamine deamidase CheD (214 aa).

It belongs to the CheD family.

It carries out the reaction L-glutaminyl-[protein] + H2O = L-glutamyl-[protein] + NH4(+). In terms of biological role, probably deamidates glutamine residues to glutamate on methyl-accepting chemotaxis receptors (MCPs), playing an important role in chemotaxis. The chain is Probable chemoreceptor glutamine deamidase CheD from Vibrio vulnificus (strain CMCP6).